The chain runs to 176 residues: Inorganic pyrophosphatase (176 aa).

Substrate-binding residues include Lys-30, Arg-44, and Tyr-56. Mg(2+) contacts are provided by Asp-66, Asp-71, and Asp-103. Residue Tyr-142 participates in substrate binding.

It belongs to the PPase family. In terms of assembly, homohexamer. The cofactor is Mg(2+).

Its subcellular location is the cytoplasm. The catalysed reaction is diphosphate + H2O = 2 phosphate + H(+). Functionally, catalyzes the hydrolysis of inorganic pyrophosphate (PPi) forming two phosphate ions. This is Inorganic pyrophosphatase from Aeropyrum pernix (strain ATCC 700893 / DSM 11879 / JCM 9820 / NBRC 100138 / K1).